Here is a 154-residue protein sequence, read N- to C-terminus: uncharacterized protein (154 aa).

One can recognise a HotDog ACOT-type domain in the interval Ser13–Asn128.

The protein belongs to the acyl coenzyme A hydrolase family.

This is an uncharacterized protein from Haemophilus influenzae (strain ATCC 51907 / DSM 11121 / KW20 / Rd).